The sequence spans 949 residues: Copper-transporting ATPase PAA1, chloroplastic (949 aa).

Residues 1 to 103 (MESTLSAFST…SSSPSFRSIS (103 aa)) constitute a chloroplast transit peptide. A compositionally biased stretch (gly residues) spans 113–126 (YNGGSGGGGGGGSE). Residues 113–142 (YNGGSGGGGGGGSESGDSKSKLGANASDGV) form a disordered region. The HMA domain occupies 148–222 (DIIILDVGGM…HLTNCGFQST (75 aa)). Residues Cys-159 and Cys-162 each contribute to the Cu(+) site. 6 helical membrane-spanning segments follow: residues 253-274 (LAVSWALCAVCLVGHLTHFLGV), 287-306 (FHVSLCLITLLGPGRKLVLD), 314-334 (GSPNMNTLVGLGALSSFSVSS), 349-369 (EEPVMLIAFVLLGRNLEQRAK), 502-524 (VAGRFTYGVMALSAATFTFWNLF), and 543-560 (LQLSCSVLVVACPCALGL). Asp-598 functions as the 4-aspartylphosphate intermediate in the catalytic mechanism. 807–814 (GDGINDAA) contacts ATP. Residues Asp-808 and Asp-812 each coordinate Mg(2+). 2 consecutive transmembrane segments (helical) span residues 863 to 882 (KQNLWWAFGYNIVGIPIAAG) and 895 to 913 (SMAGALMGVSSLGVMTNSL). Positions 925–949 (DKNVKPEPKEGTKQPHENTRWKQSS) are disordered.

Belongs to the cation transport ATPase (P-type) (TC 3.A.3) family. Type IB subfamily. In terms of tissue distribution, expressed in the shoots and roots.

It localises to the plastid. It is found in the chloroplast membrane. The catalysed reaction is Cu(+)(in) + ATP + H2O = Cu(+)(out) + ADP + phosphate + H(+). Mediates copper transfer across the plastid envelope. Required for the delivery of copper into the plastid stroma, which is essential for the function of copper proteins. Seems to be selective for monovalent copper Cu(+) transport. Also plays a role in glucose signaling-mediated cell proliferation of root meristem in non-green tissues. The sequence is that of Copper-transporting ATPase PAA1, chloroplastic (PAA1) from Arabidopsis thaliana (Mouse-ear cress).